The following is a 470-amino-acid chain: Desmin (470 aa).

Residues 2 to 108 are head; the sequence is SQAYSSSQRV…QEFLTTRTNE (107 aa). Phosphoserine; by CDK1 is present on Ser-7. At Ser-12 the chain carries Phosphoserine; by AURKB. Arg-16 carries the post-translational modification Omega-N-methylarginine. Thr-17 is subject to Phosphothreonine; by AURKB and ROCK1. Ser-28 is subject to Phosphoserine; by CDK1. Ser-31 carries the post-translational modification Phosphoserine. Phosphoserine; by CDK1 is present on Ser-32. Asymmetric dimethylarginine; alternate is present on Arg-37. Arg-37 bears the Omega-N-methylarginine; alternate mark. Position 45 is a phosphoserine (Ser-45). ADP-ribosylarginine is present on Arg-58. Position 60 is a phosphoserine; by AURKB (Ser-60). An Omega-N-methylarginine modification is found at Arg-70. A Phosphothreonine; by ROCK1 modification is found at Thr-77. Ser-81 carries the phosphoserine modification. One can recognise an IF rod domain in the interval 108 to 416; sequence EKVELQELND…KLLEGEESRI (309 aa). Positions 109–141 are coil 1A; the sequence is KVELQELNDRFANYIEKVRFLEQQNAALAAEVN. The segment at 142–151 is linker 1; it reads RLKGREPTRV. Residues 152–252 form a coil 1B region; sequence AEIYEEELRE…HEEEIRELQA (101 aa). The interval 253–268 is linker 12; sequence QLQEQQVQVEMDMSKP. Positions 268 to 415 are interaction with NEB; that stretch reads PDLTAALRDI…RKLLEGEESR (148 aa). The tract at residues 269–287 is coil 2A; that stretch reads DLTAALRDIRAQYETIAAK. Positions 288 to 295 are linker 2; sequence NISEAEEW. Phosphoserine is present on residues Ser-290, Ser-358, Ser-361, and Ser-424. The segment at 296–412 is coil 2B; sequence YKSKVSDLTQ…ATYRKLLEGE (117 aa). A tail region spans residues 413 to 470; that stretch reads ESRINLPIQTFSALNFRETSPEQRGSEVHTKKTVMIKTIETRDGEVVSEATQQQHEVL. Residues 438–453 form an interaction with CRYAB region; it reads SEVHTKKTVMIKTIET.

This sequence belongs to the intermediate filament family. Homomer. Interacts with DST. Interacts with MTM1. Interacts with EPPK1; interaction is dependent of higher-order structure of intermediate filament. Interacts with CRYAB. Interacts with NEB (via nebulin repeats 160-164). Interacts (via rod region) with NEBL (via nebulin repeats 1-5). Interacts with ASB2; the interaction targets DES for proteasomal degradation. Interacts with PKP1. Interacts with FLII. In terms of processing, ADP-ribosylation prevents ability to form intermediate filaments. Post-translationally, phosphorylation at Ser-7, Ser-28 and Ser-32 by CDK1 and phosphorylation at Ser-60 by AURKB contribute to efficient separation of desmin intermediate filaments during mitosis. Ubiquitination by a SCF-like complex containing ASB2 leads to proteasomal degradation.

It is found in the cytoplasm. Its subcellular location is the myofibril. It localises to the sarcomere. The protein localises to the z line. The protein resides in the cell membrane. It is found in the sarcolemma. Its subcellular location is the nucleus. It localises to the cell tip. The protein localises to the nucleus envelope. In terms of biological role, muscle-specific type III intermediate filament essential for proper muscular structure and function. Plays a crucial role in maintaining the structure of sarcomeres, inter-connecting the Z-disks and forming the myofibrils, linking them not only to the sarcolemmal cytoskeleton, but also to the nucleus and mitochondria, thus providing strength for the muscle fiber during activity. In adult striated muscle they form a fibrous network connecting myofibrils to each other and to the plasma membrane from the periphery of the Z-line structures. May act as a sarcomeric microtubule-anchoring protein: specifically associates with detyrosinated tubulin-alpha chains, leading to buckled microtubules and mechanical resistance to contraction. Required for nuclear membrane integrity, via anchoring at the cell tip and nuclear envelope, resulting in maintenance of microtubule-derived intracellular mechanical forces. Contributes to the transcriptional regulation of the NKX2-5 gene in cardiac progenitor cells during a short period of cardiomyogenesis and in cardiac side population stem cells in the adult. Plays a role in maintaining an optimal conformation of nebulette (NEB) on heart muscle sarcomeres to bind and recruit cardiac alpha-actin. The protein is Desmin (DES) of Bos taurus (Bovine).